Reading from the N-terminus, the 1740-residue chain is Vitamin B12-dependent ribonucleoside-diphosphate reductase (1740 aa).

Residues 4 to 96 form the ATP-cone domain; that stretch reads EKVMKRDGRI…LYRKKKAEIR (93 aa). Residues Thr257, 272 to 273, and Gly301 each bind substrate; that span reads AC. Cys273 and Cys1308 are disulfide-bonded. One can recognise a DOD-type homing endonuclease 1 domain in the interval 443-582; that stretch reads LAGFIAGDGC…VTHYLNALGI (140 aa). Catalysis depends on Asn913, which acts as the Proton acceptor. A substrate-binding site is contributed by 913–914; it reads NP. Residues 1063-1194 enclose the DOD-type homing endonuclease 2 domain; it reads VLGWFIGDGY…VQDLLLLFGI (132 aa). Catalysis depends on Cys1297, which acts as the Cysteine radical intermediate. Residues 1297–1299 and 1471–1475 contribute to the substrate site; these read CGE and PTGSV. The active-site Proton acceptor is Glu1299.

The protein belongs to the ribonucleoside diphosphate reductase class-2 family. Requires adenosylcob(III)alamin as cofactor. In terms of processing, this protein undergoes a protein self splicing that involves a post-translational excision of the intervening region (intein) followed by peptide ligation.

The enzyme catalyses a 2'-deoxyribonucleoside 5'-diphosphate + [thioredoxin]-disulfide + H2O = a ribonucleoside 5'-diphosphate + [thioredoxin]-dithiol. Functionally, provides the precursors necessary for DNA synthesis. Catalyzes the biosynthesis of deoxyribonucleotides from the corresponding ribonucleotides. The sequence is that of Vitamin B12-dependent ribonucleoside-diphosphate reductase (rnr) from Pyrococcus furiosus (strain ATCC 43587 / DSM 3638 / JCM 8422 / Vc1).